The sequence spans 436 residues: Serine--tRNA ligase (436 aa).

Residue Thr-239–Glu-241 participates in L-serine binding. An ATP-binding site is contributed by Arg-270–Glu-272. Residue Glu-293 participates in L-serine binding. ATP is bound at residue Glu-357–Ser-360. Position 392 (Ser-392) interacts with L-serine.

It belongs to the class-II aminoacyl-tRNA synthetase family. Type-1 seryl-tRNA synthetase subfamily. Homodimer. The tRNA molecule binds across the dimer.

The protein resides in the cytoplasm. It catalyses the reaction tRNA(Ser) + L-serine + ATP = L-seryl-tRNA(Ser) + AMP + diphosphate + H(+). The catalysed reaction is tRNA(Sec) + L-serine + ATP = L-seryl-tRNA(Sec) + AMP + diphosphate + H(+). The protein operates within aminoacyl-tRNA biosynthesis; selenocysteinyl-tRNA(Sec) biosynthesis; L-seryl-tRNA(Sec) from L-serine and tRNA(Sec): step 1/1. Functionally, catalyzes the attachment of serine to tRNA(Ser). Is also able to aminoacylate tRNA(Sec) with serine, to form the misacylated tRNA L-seryl-tRNA(Sec), which will be further converted into selenocysteinyl-tRNA(Sec). The sequence is that of Serine--tRNA ligase from Leuconostoc citreum (strain KM20).